The primary structure comprises 357 residues: Protein RecA (357 aa).

71–78 is an ATP binding site; that stretch reads GPESSGKT.

This sequence belongs to the RecA family.

It localises to the cytoplasm. Can catalyze the hydrolysis of ATP in the presence of single-stranded DNA, the ATP-dependent uptake of single-stranded DNA by duplex DNA, and the ATP-dependent hybridization of homologous single-stranded DNAs. It interacts with LexA causing its activation and leading to its autocatalytic cleavage. The chain is Protein RecA from Ehrlichia canis (strain Jake).